A 286-amino-acid chain; its full sequence is Fructose-bisphosphate aldolase (286 aa).

Ser50 serves as a coordination point for D-glyceraldehyde 3-phosphate. Asp85 functions as the Proton donor in the catalytic mechanism. Zn(2+)-binding residues include His86, Asp107, Glu137, and His181. Gly182 contacts dihydroxyacetone phosphate. A Zn(2+)-binding site is contributed by His209. Residues Gly210–Thr212 and Asn231–Thr234 each bind dihydroxyacetone phosphate.

This sequence belongs to the class II fructose-bisphosphate aldolase family. Zn(2+) is required as a cofactor.

The enzyme catalyses beta-D-fructose 1,6-bisphosphate = D-glyceraldehyde 3-phosphate + dihydroxyacetone phosphate. The protein operates within carbohydrate degradation; glycolysis; D-glyceraldehyde 3-phosphate and glycerone phosphate from D-glucose: step 4/4. In terms of biological role, catalyzes the aldol condensation of dihydroxyacetone phosphate (DHAP or glycerone-phosphate) with glyceraldehyde 3-phosphate (G3P) to form fructose 1,6-bisphosphate (FBP) in gluconeogenesis and the reverse reaction in glycolysis. The chain is Fructose-bisphosphate aldolase (fba) from Staphylococcus epidermidis (strain ATCC 35984 / DSM 28319 / BCRC 17069 / CCUG 31568 / BM 3577 / RP62A).